Reading from the N-terminus, the 211-residue chain is uncharacterized protein (211 aa).

This sequence belongs to the nucleoside deoxyribosyltransferase family.

It localises to the cytoplasm. Its subcellular location is the nucleus. This is an uncharacterized protein from Schizosaccharomyces pombe (strain 972 / ATCC 24843) (Fission yeast).